A 305-amino-acid polypeptide reads, in one-letter code: Olfactory receptor 4B13 (305 aa).

Over 1–25 (MANKNNVTELIFTGLFQDPEVQKVC) the chain is Extracellular. A glycan (N-linked (GlcNAc...) asparagine) is linked at Asn6. A helical membrane pass occupies residues 26–46 (FVLFLPVYLATLLGNSLILVA). Residues 47-55 (VSISKTLHS) lie on the Cytoplasmic side of the membrane. Residues 56–76 (PMYFFLSSLSLVEICYSSTIV) traverse the membrane as a helical segment. The Extracellular segment spans residues 77-95 (PKFITDLLAKVKTISLKGC). Cys95 and Cys187 are joined by a disulfide. The helical transmembrane segment at 96–116 (LTQIFFSHFFGVVEVILLVVM) threads the bilayer. The Cytoplasmic segment spans residues 117–141 (AYDRYVAICKPLHYMNIMSRQVCHM). Residues 142-162 (LVAGSWLGGFIHSIIQIIITI) traverse the membrane as a helical segment. Residues 163–202 (PLPFCGPNVIDHYFCDLQQLFKLACTDTFMEGFIVMANSG) are Extracellular-facing. A helical membrane pass occupies residues 203-223 (LISIVSLFILVSSYAVILISL). At 224-236 (RKRSAEGRRKALS) the chain is on the cytoplasmic side. The helical transmembrane segment at 237 to 257 (TCASHITVVILFFVPGAFIYM) threads the bilayer. Over 258–266 (RPSSTFTED) the chain is Extracellular. The helical transmembrane segment at 267–287 (KLVSVFYTVITPMLNPIVYTL) threads the bilayer. Residues 288-305 (RNTEMKNAIRMSWKQKDS) lie on the Cytoplasmic side of the membrane.

It belongs to the G-protein coupled receptor 1 family.

The protein resides in the cell membrane. Its function is as follows. Odorant receptor. In Mus musculus (Mouse), this protein is Olfactory receptor 4B13.